The chain runs to 275 residues: Tropinone reductase-like 2 (275 aa).

17 to 41 (IITGGASGIGACTAELFHENGAKVV) provides a ligand contact to NAD(+). Ser150 is a substrate binding site. Tyr163 acts as the Proton acceptor in catalysis.

The protein belongs to the short-chain dehydrogenases/reductases (SDR) family.

Has no tropinone reductase activity. The polypeptide is Tropinone reductase-like 2 (Erythroxylum coca (Coca plant)).